A 294-amino-acid chain; its full sequence is Tetraspanin-15 (294 aa).

Residues 1 to 23 (MPRGDSEQVRYCARFSYLWLKFS) lie on the Cytoplasmic side of the membrane. A helical membrane pass occupies residues 24-44 (LIIYSTVFWLIGALVLSVGIY). The Extracellular portion of the chain corresponds to 45–62 (AEVERQKYKTLESAFLAP). The chain crosses the membrane as a helical span at residues 63–83 (AIILILLGVVMFMVSFIGVLA). At 84–93 (SLRDNLYLLQ) the chain is on the cytoplasmic side. Residues 94 to 114 (AFMYILGICLIMELIGGVVAL) traverse the membrane as a helical segment. Topologically, residues 115–235 (TFRNQTIDFL…WFMDNYTIMA (121 aa)) are extracellular. Residue Asn118 is glycosylated (N-linked (GlcNAc...) asparagine). 4 disulfides stabilise this stretch: Cys154-Cys219, Cys155-Cys185, Cys171-Cys179, and Cys186-Cys198. N-linked (GlcNAc...) asparagine glycans are attached at residues Asn189 and Asn230. The chain crosses the membrane as a helical span at residues 236-256 (GILLGILLPQFLGVLLTLLYI). Residues 257 to 294 (TRVEDIIMEHSVTDGLLGPGAKPSVEAAGTGCCLCYPN) are Cytoplasmic-facing.

It belongs to the tetraspanin (TM4SF) family. In terms of assembly, interacts with ADAM10; the interaction influences ADAM10 substrate specificity, endocytosis and turnover. Post-translationally, palmitoylated.

It is found in the cell membrane. Its subcellular location is the late endosome membrane. In terms of biological role, part of TspanC8 subgroup, composed of 6 members that interact with the transmembrane metalloprotease ADAM10. This interaction is required for ADAM10 exit from the endoplasmic reticulum and for enzymatic maturation and trafficking to the cell surface as well as substrate specificity. Different TspanC8/ADAM10 complexes have distinct substrates. Promotes ADAM10-mediated cleavage of CDH2. Negatively regulates ligand-induced Notch activity probably by regulating ADAM10 activity. The polypeptide is Tetraspanin-15 (Homo sapiens (Human)).